A 706-amino-acid chain; its full sequence is Translation initiation factor IF-2 (706 aa).

Residues 55 to 117 (KEVNSDSNQE…PTMKDEKGLI (63 aa)) are disordered. The segment covering 67–81 (VNTDDKLDKIDKPNK) has biased composition (basic and acidic residues). The segment covering 93 to 108 (KNKKSKKKQKNKKKGP) has biased composition (basic residues). Residues 208–375 (SRPPVVTVMG…MILLVSEVEE (168 aa)) form the tr-type G domain. Residues 217–224 (GHVDHGKT) form a G1 region. 217–224 (GHVDHGKT) is a GTP binding site. The G2 stretch occupies residues 242–246 (GITQH). The tract at residues 263-266 (DTPG) is G3. GTP contacts are provided by residues 263–267 (DTPGH) and 317–320 (NKID). Residues 317-320 (NKID) form a G4 region. Positions 353–355 (SAI) are G5.

The protein belongs to the TRAFAC class translation factor GTPase superfamily. Classic translation factor GTPase family. IF-2 subfamily.

The protein resides in the cytoplasm. In terms of biological role, one of the essential components for the initiation of protein synthesis. Protects formylmethionyl-tRNA from spontaneous hydrolysis and promotes its binding to the 30S ribosomal subunits. Also involved in the hydrolysis of GTP during the formation of the 70S ribosomal complex. This is Translation initiation factor IF-2 from Alkaliphilus metalliredigens (strain QYMF).